We begin with the raw amino-acid sequence, 193 residues long: Putative manganese efflux pump MntP (193 aa).

The next 6 membrane-spanning stretches (helical) occupy residues 3-23 (MYATLILALALSMDAFAASIC), 41-61 (LIFGLAEACTPLIGWSLGLYA), 65-85 (IIEWDHWVAFTLLFILGCRMI), 106-126 (IVLITTAIATSLDAMAIGIGL), 133-153 (IVHTAMAIGMMTMIMATLGML), and 169-189 (IGGLILIAIGFNILFEHLELF).

Belongs to the MntP (TC 9.B.29) family.

The protein resides in the cell inner membrane. In terms of biological role, probably functions as a manganese efflux pump. In Photorhabdus laumondii subsp. laumondii (strain DSM 15139 / CIP 105565 / TT01) (Photorhabdus luminescens subsp. laumondii), this protein is Putative manganese efflux pump MntP.